We begin with the raw amino-acid sequence, 340 residues long: Glyceraldehyde-3-phosphate dehydrogenase (340 aa).

Residues 11–12 (SI) and Gly111 contribute to the NAD(+) site. A D-glyceraldehyde 3-phosphate-binding site is contributed by 140-142 (SCN). The active-site Nucleophile is Cys141. Position 169 (Arg169) interacts with NAD(+). D-glyceraldehyde 3-phosphate is bound at residue 195–196 (HG). Gln303 is an NAD(+) binding site.

Belongs to the glyceraldehyde-3-phosphate dehydrogenase family. As to quaternary structure, homotetramer.

The protein resides in the cytoplasm. It carries out the reaction D-glyceraldehyde 3-phosphate + phosphate + NADP(+) = (2R)-3-phospho-glyceroyl phosphate + NADPH + H(+). The enzyme catalyses D-glyceraldehyde 3-phosphate + phosphate + NAD(+) = (2R)-3-phospho-glyceroyl phosphate + NADH + H(+). The protein operates within carbohydrate degradation; glycolysis; pyruvate from D-glyceraldehyde 3-phosphate: step 1/5. This chain is Glyceraldehyde-3-phosphate dehydrogenase, found in Methanococcus maripaludis (strain C5 / ATCC BAA-1333).